The following is a 524-amino-acid chain: 2-isopropylmalate synthase (524 aa).

The 263-residue stretch at 12 to 274 (VIIFDTTLRD…WNRIETTMLT (263 aa)) folds into the Pyruvate carboxyltransferase domain. Mn(2+) contacts are provided by aspartate 21, histidine 209, histidine 211, and asparagine 245. The tract at residues 398 to 524 (KLMSLTVIAG…EDAPAVAVAG (127 aa)) is regulatory domain.

It belongs to the alpha-IPM synthase/homocitrate synthase family. LeuA type 1 subfamily. In terms of assembly, homodimer. Requires Mn(2+) as cofactor.

The protein localises to the cytoplasm. It carries out the reaction 3-methyl-2-oxobutanoate + acetyl-CoA + H2O = (2S)-2-isopropylmalate + CoA + H(+). Its pathway is amino-acid biosynthesis; L-leucine biosynthesis; L-leucine from 3-methyl-2-oxobutanoate: step 1/4. In terms of biological role, catalyzes the condensation of the acetyl group of acetyl-CoA with 3-methyl-2-oxobutanoate (2-ketoisovalerate) to form 3-carboxy-3-hydroxy-4-methylpentanoate (2-isopropylmalate). The polypeptide is 2-isopropylmalate synthase (Rhodopseudomonas palustris (strain ATCC BAA-98 / CGA009)).